We begin with the raw amino-acid sequence, 156 residues long: Large ribosomal subunit protein uL15 (156 aa).

The tract at residues 25 to 49 (RGIGCGKGKTSGRGHKGQKARSGTS) is disordered. Basic residues predominate over residues 34 to 43 (TSGRGHKGQK).

It belongs to the universal ribosomal protein uL15 family. Part of the 50S ribosomal subunit.

Binds to the 23S rRNA. This chain is Large ribosomal subunit protein uL15, found in Wolbachia sp. subsp. Brugia malayi (strain TRS).